A 390-amino-acid chain; its full sequence is Dihydroorotase (390 aa).

Residues histidine 54 and histidine 56 each contribute to the Zn(2+) site. Substrate contacts are provided by residues 56–58 (HIR) and asparagine 88. Lysine 136, histidine 160, histidine 197, and aspartate 259 together coordinate Zn(2+). The residue at position 136 (lysine 136) is an N6-carboxylysine. Residue aspartate 259 is part of the active site. Substrate-binding positions include histidine 263 and 277–278 (PG).

This sequence belongs to the metallo-dependent hydrolases superfamily. DHOase family. Class I DHOase subfamily. Zn(2+) serves as cofactor.

The catalysed reaction is (S)-dihydroorotate + H2O = N-carbamoyl-L-aspartate + H(+). It participates in pyrimidine metabolism; UMP biosynthesis via de novo pathway; (S)-dihydroorotate from bicarbonate: step 3/3. Its function is as follows. Catalyzes the reversible cyclization of carbamoyl aspartate to dihydroorotate. This Saccharolobus solfataricus (strain ATCC 35092 / DSM 1617 / JCM 11322 / P2) (Sulfolobus solfataricus) protein is Dihydroorotase.